The sequence spans 336 residues: Phosphate acyltransferase (336 aa).

It belongs to the PlsX family. In terms of assembly, homodimer. Probably interacts with PlsY.

The protein localises to the cytoplasm. It carries out the reaction a fatty acyl-[ACP] + phosphate = an acyl phosphate + holo-[ACP]. The protein operates within lipid metabolism; phospholipid metabolism. In terms of biological role, catalyzes the reversible formation of acyl-phosphate (acyl-PO(4)) from acyl-[acyl-carrier-protein] (acyl-ACP). This enzyme utilizes acyl-ACP as fatty acyl donor, but not acyl-CoA. In Pseudomonas fluorescens (strain ATCC BAA-477 / NRRL B-23932 / Pf-5), this protein is Phosphate acyltransferase.